A 297-amino-acid chain; its full sequence is Nucleotide-binding protein Bphy_0322 (297 aa).

8–15 serves as a coordination point for ATP; that stretch reads GISGSGKS. 57–60 contacts GTP; the sequence is DARS.

The protein belongs to the RapZ-like family.

Displays ATPase and GTPase activities. The sequence is that of Nucleotide-binding protein Bphy_0322 from Paraburkholderia phymatum (strain DSM 17167 / CIP 108236 / LMG 21445 / STM815) (Burkholderia phymatum).